Here is a 127-residue protein sequence, read N- to C-terminus: uncharacterized protein (127 aa).

A helical transmembrane segment spans residues 12 to 32; that stretch reads FFFLILFYFCIISSFLFLFIF.

Its subcellular location is the membrane. This is an uncharacterized protein from Saccharomyces cerevisiae (strain ATCC 204508 / S288c) (Baker's yeast).